Consider the following 856-residue polypeptide: MAP kinase phosphatase with leucine-rich repeats protein 3 (856 aa).

Residues 1–10 are compositionally biased toward low complexity; it reads MGNSHSSENG. Disordered regions lie at residues 1-24, 84-195, and 214-326; these read MGNSHSSENGGNSGSGGGSGGGGS, VKKN…SSVL, and DDNS…NAKD. The N-myristoyl glycine moiety is linked to residue Gly2. Positions 11-24 are enriched in gly residues; that stretch reads GNSGSGGGSGGGGS. Residues 90-142 show a composition bias toward low complexity; the sequence is NSSNNNSNNNSNNNNNNNTLNNSTIITTTTTTTTTSTPTTTIMITPPQQQQQQ. Residues 155 to 165 are compositionally biased toward polar residues; the sequence is ESSTPNEQQIR. Composition is skewed to low complexity over residues 178–195 and 224–243; these read ESSFLKSSPVPSPSSSVL and QQQQQQQNEDSKQSSQQQTQ. 2 stretches are compositionally biased toward polar residues: residues 254-265 and 272-281; these read IVNNKSSSTTNI and AQTSRSTSIP. Over residues 306–323 the composition is skewed to low complexity; it reads NSLSSSNIITPNNTTNTN. 8 LRR repeats span residues 344–365, 370–391, 392–413, 416–437, 439–461, 462–484, 485–506, and 507–528; these read KIFSLDLSINRLENITNDILSI, EIQELTLSTNFFQIIPDLQLVK, SLTTVNLTRNKLSKLQTSVFIE, SLTSLILDRNFISSIPDDIDQI, NLKYLSIKHNALEYLPNSLSNLS, QLISLDLSQNKLKTLPPNFDDLI, NLRMVWLSYNQITSLPSMRKLV, and NLVTFDISSNKLLSLPKDFAYL. The segment at 554 to 577 is disordered; that stretch reads NINSNNNDSNNSNNNNNNNNDNNN. The 142-residue stretch at 632–773 folds into the Tyrosine-protein phosphatase domain; the sequence is IPSEIIPGIF…LLKYEAKLFC (142 aa). The active-site Phosphocysteine intermediate is Cys717. The segment at 810–856 is disordered; it reads INNSSNSNNNNSTDNSNNSSTSTTPNLSSLSSDSSSSASLSKLSISK.

Belongs to the protein-tyrosine phosphatase family. Non-receptor class dual specificity subfamily.

The enzyme catalyses O-phospho-L-tyrosyl-[protein] + H2O = L-tyrosyl-[protein] + phosphate. It carries out the reaction O-phospho-L-seryl-[protein] + H2O = L-seryl-[protein] + phosphate. The catalysed reaction is O-phospho-L-threonyl-[protein] + H2O = L-threonyl-[protein] + phosphate. In terms of biological role, probable phosphatase with dual specificity toward Ser/Thr and Tyr-containing proteins. This chain is MAP kinase phosphatase with leucine-rich repeats protein 3 (mpl3), found in Dictyostelium discoideum (Social amoeba).